Reading from the N-terminus, the 328-residue chain is Carbonic anhydrase-related protein 10 (328 aa).

The 271-residue stretch at 31 to 301 (GWWAYKEVVQ…LNNRCIRTNI (271 aa)) folds into the Alpha-carbonic anhydrase domain.

Belongs to the alpha-carbonic anhydrase family.

In terms of biological role, does not have a catalytic activity. This Bos taurus (Bovine) protein is Carbonic anhydrase-related protein 10 (CA10).